A 529-amino-acid chain; its full sequence is Bifunctional purine biosynthesis protein PurH (529 aa).

The MGS-like domain occupies aspartate 3–valine 149.

It belongs to the PurH family.

It catalyses the reaction (6R)-10-formyltetrahydrofolate + 5-amino-1-(5-phospho-beta-D-ribosyl)imidazole-4-carboxamide = 5-formamido-1-(5-phospho-D-ribosyl)imidazole-4-carboxamide + (6S)-5,6,7,8-tetrahydrofolate. The catalysed reaction is IMP + H2O = 5-formamido-1-(5-phospho-D-ribosyl)imidazole-4-carboxamide. It participates in purine metabolism; IMP biosynthesis via de novo pathway; 5-formamido-1-(5-phospho-D-ribosyl)imidazole-4-carboxamide from 5-amino-1-(5-phospho-D-ribosyl)imidazole-4-carboxamide (10-formyl THF route): step 1/1. It functions in the pathway purine metabolism; IMP biosynthesis via de novo pathway; IMP from 5-formamido-1-(5-phospho-D-ribosyl)imidazole-4-carboxamide: step 1/1. The sequence is that of Bifunctional purine biosynthesis protein PurH from Paracoccus denitrificans (strain Pd 1222).